The following is a 763-amino-acid chain: Phosphoglycerol transferase I (763 aa).

Helical transmembrane passes span 1–21 (MSELLSVALFLASVLIYAWKA), 26–46 (WWFAATLTVLGLFVILNITLY), 77–97 (ILPGIGIALALVAVFGALGWV), and 108–128 (VGYSLLALLLALGSVDASPAF).

It belongs to the OpgB family.

It localises to the cell inner membrane. It carries out the reaction a phosphatidylglycerol + a membrane-derived-oligosaccharide D-glucose = a 1,2-diacyl-sn-glycerol + a membrane-derived-oligosaccharide 6-(glycerophospho)-D-glucose.. It functions in the pathway glycan metabolism; osmoregulated periplasmic glucan (OPG) biosynthesis. Its function is as follows. Transfers a phosphoglycerol residue from phosphatidylglycerol to the membrane-bound nascent glucan backbones. The chain is Phosphoglycerol transferase I from Salmonella schwarzengrund (strain CVM19633).